Consider the following 114-residue polypeptide: MKLSTLLVAFVLLVITVILSTPSTNAKALAESNALAVAVSEAEPWLGALFSFIRFIAPYVIRAVRVLIQVVSKVVKPAKVAMKYAKKIATNVAKDVAKDMATDIAIDTITGGDE.

An N-terminal signal peptide occupies residues 1 to 20 (MKLSTLLVAFVLLVITVILS). A propeptide spanning residues 21–44 (TPSTNAKALAESNALAVAVSEAEP) is cleaved from the precursor.

This sequence belongs to the formicidae venom precursor-01 superfamily. In terms of tissue distribution, expressed by the venom gland.

The protein localises to the secreted. In terms of biological role, may have antimicrobial properties, like most ant linear peptides. This chain is U-myrmeciitoxin(01)-Mg8a, found in Myrmecia gulosa (Red bulldog ant).